The chain runs to 204 residues: Inactive ribonuclease-like protein 9 (204 aa).

The N-terminal stretch at 1 to 26 is a signal peptide; that stretch reads MMRTLITTHPLLLLLLLQQLLQPVQF. 3 disulfide bridges follow: Cys-97-Cys-152, Cys-115-Cys-167, and Cys-122-Cys-129. 2 N-linked (GlcNAc...) asparagine glycosylation sites follow: Asn-130 and Asn-142.

Belongs to the pancreatic ribonuclease family.

It localises to the secreted. In terms of biological role, does not exhibit any ribonuclease activity. The polypeptide is Inactive ribonuclease-like protein 9 (RNASE9) (Macaca mulatta (Rhesus macaque)).